Consider the following 237-residue polypeptide: Probable transcriptional regulatory protein MCAP_0598 (237 aa).

The protein belongs to the TACO1 family.

The protein localises to the cytoplasm. The sequence is that of Probable transcriptional regulatory protein MCAP_0598 from Mycoplasma capricolum subsp. capricolum (strain California kid / ATCC 27343 / NCTC 10154).